Here is a 205-residue protein sequence, read N- to C-terminus: Transmembrane emp24 domain-containing protein A (205 aa).

A signal peptide spans 1 to 24 (MMNNKLLLLVIALLCIASNSIVES). Topologically, residues 25–172 (FSFKVSAKVE…RNTAESTNSR (148 aa)) are lumenal. The GOLD domain maps to 34-116 (EECIYEEIGV…DKTVSFILSV (83 aa)). A helical membrane pass occupies residues 173-193 (VLWWSVFEAFVLIALSIWQIY). The Cytoplasmic portion of the chain corresponds to 194–205 (YLRRFFEVKRAV).

This sequence belongs to the EMP24/GP25L family.

Its subcellular location is the cytoplasmic vesicle membrane. Could have a role in the budding of coatomer-coated and other species of coated vesicles. The chain is Transmembrane emp24 domain-containing protein A (empA) from Dictyostelium discoideum (Social amoeba).